The following is a 150-amino-acid chain: uncharacterized protein (150 aa).

Repeat copies occupy residues 101-105, 106-110, 111-115, 116-120, and 121-125. Positions 101 to 125 are 5 X 5 AA tandem repeats of [FH]-H-[EK]-[IV]-N; that stretch reads FHEVNHHEVNHHKINHHEVNHHKIN.

The protein belongs to the asfivirus D129L family.

This is an uncharacterized protein from African swine fever virus (isolate Tick/Malawi/Lil 20-1/1983) (ASFV).